The following is a 35-amino-acid chain: Photosystem II reaction center protein T (35 aa).

Residues 3–23 traverse the membrane as a helical segment; the sequence is ALVYTFLLVSTLGIIFFAIFF.

The protein belongs to the PsbT family. In terms of assembly, PSII is composed of 1 copy each of membrane proteins PsbA, PsbB, PsbC, PsbD, PsbE, PsbF, PsbH, PsbI, PsbJ, PsbK, PsbL, PsbM, PsbT, PsbY, PsbZ, Psb30/Ycf12, at least 3 peripheral proteins of the oxygen-evolving complex and a large number of cofactors. It forms dimeric complexes.

It localises to the plastid. It is found in the chloroplast thylakoid membrane. In terms of biological role, found at the monomer-monomer interface of the photosystem II (PS II) dimer, plays a role in assembly and dimerization of PSII. PSII is a light-driven water plastoquinone oxidoreductase, using light energy to abstract electrons from H(2)O, generating a proton gradient subsequently used for ATP formation. The sequence is that of Photosystem II reaction center protein T from Cabomba caroliniana (Carolina fanwort).